The chain runs to 515 residues: ATP synthase subunit alpha (515 aa).

Residue 171 to 178 (GDRQTGKT) participates in ATP binding.

It belongs to the ATPase alpha/beta chains family. In terms of assembly, F-type ATPases have 2 components, CF(1) - the catalytic core - and CF(0) - the membrane proton channel. CF(1) has five subunits: alpha(3), beta(3), gamma(1), delta(1), epsilon(1). CF(0) has three main subunits: a(1), b(2) and c(9-12). The alpha and beta chains form an alternating ring which encloses part of the gamma chain. CF(1) is attached to CF(0) by a central stalk formed by the gamma and epsilon chains, while a peripheral stalk is formed by the delta and b chains.

The protein localises to the cell inner membrane. The catalysed reaction is ATP + H2O + 4 H(+)(in) = ADP + phosphate + 5 H(+)(out). Its function is as follows. Produces ATP from ADP in the presence of a proton gradient across the membrane. The alpha chain is a regulatory subunit. This Xanthomonas campestris pv. campestris (strain 8004) protein is ATP synthase subunit alpha.